Consider the following 126-residue polypeptide: Fumarate reductase subunit C (126 aa).

3 helical membrane passes run 30–50, 64–84, and 105–125; these read IFVA…GAGG, VVVV…VTWF, and VLAG…WMVL.

This sequence belongs to the FrdC family. Part of an enzyme complex containing four subunits: a flavoprotein (FrdA), an iron-sulfur protein (FrdB), and two hydrophobic anchor proteins (FrdC and FrdD).

The protein localises to the cell membrane. In terms of biological role, anchors the catalytic components of the fumarate reductase complex to the cell membrane, binds quinones. This is Fumarate reductase subunit C from Mycobacterium tuberculosis (strain ATCC 25177 / H37Ra).